The sequence spans 318 residues: Phospholipid scramblase 1 (318 aa).

The segment covering 1-14 (MDKQNSQMNASHPE) has biased composition (polar residues). Residues 1–64 (MDKQNSQMNA…GPGPAGFPVP (64 aa)) are disordered. Positions 1 to 84 (MDKQNSQMNA…NQPVGAAGVP (84 aa)) are proline-rich domain (PRD). The Cytoplasmic portion of the chain corresponds to 1–288 (MDKQNSQMNA…IQFPLDLDVK (288 aa)). Residues 18 to 26 (PVGYPPQYP) carry the SH3-binding 1 motif. 2 consecutive short sequence motifs (PPXY motif) follow at residues 22-25 (PPQY) and 33-36 (PPGY). A compositionally biased stretch (low complexity) spans 31–44 (QGPPGYSGYPGPQV). The SH3-binding 2 motif lies at 42–50 (PQVSYPPPP). Phosphotyrosine; by ABL occurs at positions 69 and 74. The SH3-binding 3 signature appears at 84 to 92 (PWMPAPQPP). The interaction with hepatitis C virus E2 glycoprotein stretch occupies residues 99 to 290 (LEYLSQIDQI…FPLDLDVKMK (192 aa)). Thr-161 bears the Phosphothreonine; by PKC/PRKCD mark. 5 S-palmitoyl cysteine lipidation sites follow: Cys-184, Cys-185, Cys-186, Cys-188, and Cys-189. A Nuclear localization signal motif is present at residues 257 to 266 (GKISKHWTGI). A helical transmembrane segment spans residues 289-305 (MKAVMIGACFLIDFMFF). At 306–318 (ESTGSQEQKSGVW) the chain is on the extracellular side.

This sequence belongs to the phospholipid scramblase family. Forms homooligomers in the presence of calcium. Interacts with ABL. Interacts with RELT, RELL1 and RELL2. Interacts with OXSR1 in the presence of RELT. Interacts with TOP2A and TOP2B. Interacts with OCLN. Interacts with TRPC5. Interacts with TRPC1 and TRPC4. Interacts with ILDR1. In terms of assembly, (Microbial infection) Interacts with hepatitis C virus E1 and E2 glycoproteins. As to quaternary structure, (Microbial infection) Interacts with T-cell leukemia virus (HTLV)-1 protein Tax (via N-terminus); this interaction represses Tax homodimerization. (Microbial infection) Interacts with HIV-1 protein Tat; this interaction represses the Tat-dependent transactivation of the HIV-1 long terminal repeat (LTR) and reduces the nuclear translocation of Tat. In terms of assembly, (Microbial infection) Interacts with hepatitis B virus protein HBx; this interaction promotes the proteasomal degradation of HBx. As to quaternary structure, (Microbial infection) Interacts with human cytomegalovirus proteins IE1 and IE2. (Microbial infection) Interacts with Epstein Barr virus (EBV) lytic switch protein BZLF1; this interaction negatively regulates the transcriptional regulatory activity of BZLF1 by preventing the formation of the BZLF1-CBP complex. In terms of assembly, (Microbial infection) Interacts with influenza virus nucleoprotein NP. It depends on Ca(2+) as a cofactor. The cofactor is Mg(2+). Requires Zn(2+) as cofactor. Phosphorylation at Thr-161 by PKC/PKCD increases its phospholipid scramblase activity during both cell stimulation and apoptosis. Phosphorylated by OXSR1 in the presence of RELT. Post-translationally, palmitoylation is required for its phospholipid scramblase activity. Palmitoylation regulates its localization to the cell membrane or the nucleus; trafficking to the cell membrane is dependent upon palmitoylation whereas in the absence of palmitoylation, localizes to the nucleus. As to expression, expressed in platelets, erythrocyte membranes, lymphocytes, spleen, thymus, prostate, testis, uterus, intestine, colon, heart, placenta, lung, liver, kidney and pancreas. Not detected in brain and skeletal muscle.

The protein resides in the cell membrane. The protein localises to the nucleus. It localises to the cytoplasm. Its subcellular location is the perinuclear region. The catalysed reaction is a 1,2-diacyl-sn-glycero-3-phosphocholine(in) = a 1,2-diacyl-sn-glycero-3-phosphocholine(out). The enzyme catalyses a 1,2-diacyl-sn-glycero-3-phosphoethanolamine(in) = a 1,2-diacyl-sn-glycero-3-phosphoethanolamine(out). It carries out the reaction a 1,2-diacyl-sn-glycero-3-phospho-L-serine(in) = a 1,2-diacyl-sn-glycero-3-phospho-L-serine(out). With respect to regulation, activated by Pb(2+) and Hg(2+) ions. Phosphorylation at Thr-161 by PKC/PKCD increases its phospholipid scramblase activity during both cell stimulation and apoptosis. In terms of biological role, catalyzes calcium-induced ATP-independent rapid bidirectional and non-specific movement of phospholipids (lipid scrambling or lipid flip-flop) between the inner and outer leaflet of the plasma membrane resulting in collapse of the phospholipid asymmetry which leads to phosphatidylserine externalization on the cell surface. Mediates calcium-dependent phosphatidylserine externalization and apoptosis in neurons via its association with TRPC5. Also exhibits magnesium-dependent nuclease activity against double-stranded DNA and RNA but not single-stranded DNA and can enhance DNA decatenation mediated by TOP2A. Negatively regulates FcR-mediated phagocytosis in differentiated macrophages. May contribute to cytokine-regulated cell proliferation and differentiation. May play a role in the antiviral response of interferon (IFN) by amplifying and enhancing the IFN response through increased expression of select subset of potent antiviral genes. Inhibits the functions of viral transactivators, including human T-cell leukemia virus (HTLV)-1 protein Tax, human immunodeficiency virus (HIV)-1 Tat, human hepatitis B virus (HBV) HBx, Epstein-Barr virus (EBV) BZLF1 and human cytomegalovirus IE1 and IE2 proteins through direct interactions. Also mediates the inhibition of influenza virus infection by preventing nuclear import of the viral nucleoprotein/NP. Plays a crucial role as a defense factor against SARS-CoV-2 independently of its scramblase activity by directly targeting nascent viral vesicles to prevent virus-membrane fusion and the release of viral RNA into the host-cell cytosol. Functionally, (Microbial infection) Acts as an attachment receptor for HCV. The polypeptide is Phospholipid scramblase 1 (PLSCR1) (Homo sapiens (Human)).